A 208-amino-acid polypeptide reads, in one-letter code: Imidazole glycerol phosphate synthase subunit HisH (208 aa).

The Glutamine amidotransferase type-1 domain maps to 1–206 (MIVIVDYDTG…KEMTEDEALS (206 aa)). Cysteine 79 serves as the catalytic Nucleophile. Active-site residues include histidine 181 and glutamate 183.

Heterodimer of HisH and HisF.

The protein resides in the cytoplasm. It carries out the reaction 5-[(5-phospho-1-deoxy-D-ribulos-1-ylimino)methylamino]-1-(5-phospho-beta-D-ribosyl)imidazole-4-carboxamide + L-glutamine = D-erythro-1-(imidazol-4-yl)glycerol 3-phosphate + 5-amino-1-(5-phospho-beta-D-ribosyl)imidazole-4-carboxamide + L-glutamate + H(+). It catalyses the reaction L-glutamine + H2O = L-glutamate + NH4(+). Its pathway is amino-acid biosynthesis; L-histidine biosynthesis; L-histidine from 5-phospho-alpha-D-ribose 1-diphosphate: step 5/9. Functionally, IGPS catalyzes the conversion of PRFAR and glutamine to IGP, AICAR and glutamate. The HisH subunit catalyzes the hydrolysis of glutamine to glutamate and ammonia as part of the synthesis of IGP and AICAR. The resulting ammonia molecule is channeled to the active site of HisF. In Lacticaseibacillus casei (strain BL23) (Lactobacillus casei), this protein is Imidazole glycerol phosphate synthase subunit HisH.